A 132-amino-acid polypeptide reads, in one-letter code: Small ribosomal subunit protein uS8 (132 aa).

The protein belongs to the universal ribosomal protein uS8 family. As to quaternary structure, part of the 30S ribosomal subunit. Contacts proteins S5 and S12.

In terms of biological role, one of the primary rRNA binding proteins, it binds directly to 16S rRNA central domain where it helps coordinate assembly of the platform of the 30S subunit. This Anaplasma marginale (strain Florida) protein is Small ribosomal subunit protein uS8.